A 429-amino-acid polypeptide reads, in one-letter code: MTVTPIRAKEELKYEIKDISLAPSGRQRIEWAGREMPVVKQIKDRFEKEKPFEGIRLIACCHVTTETANLAIALKAGGADAVLIASNPLSTQDDVAACLVADYGIPVFAIKGEDNATYHRHVQIALDHKPNLIIDDGGDVTATLIQERKDQIADIIGTTEETTTGIVRLAAMLKDGVLSFPAMNVNDADTKHFFDNRYGTGQSTLDGIIRATNVLLAGKTVVVAGYGWCGKGTAMRARGLGANVIVTEINAVKAIEAVMDGFRVMPMIEAAPLGDLFVTVTGNKHVIRPEHFDVMKDGAIVCNSGHFDIEIDLQSLGEKASEIKEVRNFTQQYTLASGKSIVVLGEGRLINLAAAEGHPSAVMDMSFANQALACEYLVKNKGKLEPGIYNIPTEIDQEIARLKLQGMGISIDSLTPEQEAYLNSWTSGT.

Residues threonine 64, aspartate 136, and glutamate 161 each contribute to the substrate site. 162 to 164 contacts NAD(+); sequence TTT. Substrate is bound by residues lysine 191 and aspartate 195. Residues asparagine 196, 225-230, glutamate 248, asparagine 283, 304-306, and asparagine 351 each bind NAD(+); these read GYGWCG and SGH.

It belongs to the adenosylhomocysteinase family. The cofactor is NAD(+).

Its subcellular location is the cytoplasm. It catalyses the reaction S-adenosyl-L-homocysteine + H2O = L-homocysteine + adenosine. It functions in the pathway amino-acid biosynthesis; L-homocysteine biosynthesis; L-homocysteine from S-adenosyl-L-homocysteine: step 1/1. In terms of biological role, may play a key role in the regulation of the intracellular concentration of adenosylhomocysteine. This Gloeothece citriformis (strain PCC 7424) (Cyanothece sp. (strain PCC 7424)) protein is Adenosylhomocysteinase.